Reading from the N-terminus, the 218-residue chain is Ribulose-phosphate 3-epimerase (218 aa).

Residue Ser10 participates in substrate binding. Residues His35, Asp37, and His68 each contribute to the a divalent metal cation site. The active-site Proton acceptor is the Asp37. Substrate is bound by residues His68, 144–147 (GFSG), 177–179 (DGG), and 199–200 (GS). Asp177 provides a ligand contact to a divalent metal cation. Asp177 acts as the Proton donor in catalysis.

Belongs to the ribulose-phosphate 3-epimerase family. It depends on a divalent metal cation as a cofactor.

It carries out the reaction D-ribulose 5-phosphate = D-xylulose 5-phosphate. The protein operates within carbohydrate degradation. Functionally, catalyzes the reversible epimerization of D-ribulose 5-phosphate to D-xylulose 5-phosphate. In Treponema pallidum (strain Nichols), this protein is Ribulose-phosphate 3-epimerase.